The chain runs to 175 residues: Ribosome maturation factor RimM (175 aa).

The region spanning 97–175 (EGEFYWHQLE…RMVVDWDPEF (79 aa)) is the PRC barrel domain.

Belongs to the RimM family. In terms of assembly, binds ribosomal protein uS19.

The protein resides in the cytoplasm. An accessory protein needed during the final step in the assembly of 30S ribosomal subunit, possibly for assembly of the head region. Essential for efficient processing of 16S rRNA. May be needed both before and after RbfA during the maturation of 16S rRNA. It has affinity for free ribosomal 30S subunits but not for 70S ribosomes. The protein is Ribosome maturation factor RimM of Marinobacter nauticus (strain ATCC 700491 / DSM 11845 / VT8) (Marinobacter aquaeolei).